The chain runs to 3179 residues: Guanylate cyclase beta (3179 aa).

Topologically, residues 1-60 are cytoplasmic; the sequence is MKTQTLSLMNINGKRKFLGTNNKIYRKVIINPTSEDDIQKFCRNYFRIYNFSLYNFIRRL. Residues 61-81 traverse the membrane as a helical segment; sequence ISFDAILVYSLFLTVYIFSEI. At 82–88 the chain is on the extracellular side; that stretch reads NHGETKK. A helical membrane pass occupies residues 89–109; that stretch reads YLFIDTAISLFFNIILLIVIE. Residues 110 to 295 lie on the Cytoplasmic side of the membrane; that stretch reads SLFELKKLKD…FCIKMNNIVY (186 aa). A helical membrane pass occupies residues 296–316; sequence YLIFMYFVFVVLSIVIKTIFF. Over 317–328 the chain is Extracellular; it reads HKKNSFQNSRDS. Residues 329-349 form a helical membrane-spanning segment; sequence FLSMLEDFVGLYILVLPIMMY. Topologically, residues 350–988 are cytoplasmic; the sequence is SEKSLIYIIQ…GRLNRFSLCK (639 aa). The chain crosses the membrane as a helical span at residues 989–1009; sequence VFLWIIYLKITVVSFYFFHNF. Residues 1010-1020 lie on the Extracellular side of the membrane; that stretch reads DNYFSGSSASS. Residues 1021–1041 traverse the membrane as a helical segment; sequence ILYTQTTFALLHYFLIIAFSA. Topologically, residues 1042–1069 are cytoplasmic; it reads YEIDLPYKFVRRLPYIYQLSRRKYFLNN. Residues 1070 to 1090 traverse the membrane as a helical segment; that stretch reads NIILLTIIEAILISLTSYYIL. The Extracellular portion of the chain corresponds to 1091–1102; sequence RLNVFHLITHRE. Residues 1103–1123 traverse the membrane as a helical segment; that stretch reads FTFHIFILNVFITTEKILLLS. At 1124-1127 the chain is on the cytoplasmic side; sequence KTWH. A helical membrane pass occupies residues 1128 to 1148; that stretch reads IYFFIMAVLIIGILLIYVNIF. The Extracellular segment spans residues 1149-1168; the sequence is TLVDCIKNGKCEFSLFQMEN. A helical membrane pass occupies residues 1169 to 1189; that stretch reads IYFWTSLFPILYINFIFDKLM. Residues 1190–1304 are Cytoplasmic-facing; the sequence is KYIKNRIYPD…YEKGNKLKLR (115 aa). The chain crosses the membrane as a helical span at residues 1305-1325; sequence IIVILLFLIYIIIFSSQTIID. At 1326-1331 the chain is on the extracellular side; the sequence is INTKSN. A helical transmembrane segment spans residues 1332-1352; that stretch reads IHYITMFYIIYFVLACVLLIY. At 1353-1360 the chain is on the cytoplasmic side; that stretch reads IRIRNKAT. The chain crosses the membrane as a helical span at residues 1361-1381; that stretch reads STFFFFLSRFLLICGFCIELY. Topologically, residues 1382-1401 are extracellular; it reads DNISNDILNVLITYSFTVSY. N-linked (GlcNAc...) asparagine glycosylation occurs at Asn-1383. The helical transmembrane segment at 1402-1422 threads the bilayer; the sequence is IFFMSFKILEALLVCISILLL. The Cytoplasmic segment spans residues 1423–1464; sequence TFGVYYEKNKNMIDICTHFCSNPYLSINNLDHMNISCLCKKQ. The chain crosses the membrane as a helical span at residues 1465–1485; it reads IVIFLISLLSFTLICLSMKYY. Topologically, residues 1486–1507 are extracellular; it reads EIFYLKKKFLFRYKQKVNLAKQ. A helical transmembrane segment spans residues 1508-1528; sequence IEILHTMLPNFLVEYLLISDP. Residues 1529–2739 lie on the Cytoplasmic side of the membrane; the sequence is KNDGIMVGKN…IINIDLTKKL (1211 aa). One can recognise a Guanylate cyclase 1 domain in the interval 1548–1700; sequence SVIFCDIDDF…DTVNTASRMK (153 aa). 3 disordered regions span residues 2123–2153, 2355–2379, and 2576–2656; these read LHNY…YTSS, SINK…KDKK, and KDSD…HHHS. A compositionally biased stretch (basic residues) spans 2131–2142; that stretch reads NKNKNKKNNKNV. The segment covering 2584 to 2607 has biased composition (low complexity); it reads NNNKISKNRYNNNNNNNNSNYSNI. Basic residues predominate over residues 2614–2645; that stretch reads HNNKKNHHHNNNKYHHHNNNKYHHHNNNKYHH. A helical transmembrane segment spans residues 2740 to 2760; that stretch reads IIIFIFTEIFLSLCNIIELSF. At 2761–2770 the chain is on the extracellular side; that stretch reads YEKKLRYNDS. Asn-2768 carries an N-linked (GlcNAc...) asparagine glycan. The chain crosses the membrane as a helical span at residues 2771–2791; sequence IVIIWLIRSIYLFIITYIWII. The Cytoplasmic segment spans residues 2792 to 2809; the sequence is LKTKLKEYKNNSSKMMWT. Residues 2810 to 2830 form a helical membrane-spanning segment; sequence IFILNIFLCSWGIILIDLSCI. Residues 2831–2842 are Extracellular-facing; the sequence is HYSMLLGNKNER. Residues 2843–2863 traverse the membrane as a helical segment; the sequence is ALFFMKDASELIICIQLIFIK. The Cytoplasmic portion of the chain corresponds to 2864 to 2870; it reads NMLFKHK. Residues 2871–2891 traverse the membrane as a helical segment; the sequence is FFFFVFFYIFLIYSFSKLFSI. Topologically, residues 2892-2895 are extracellular; it reads HTCQ. The chain crosses the membrane as a helical span at residues 2896–2916; that stretch reads THICCSIILFISINILYFWYS. Over 2917–3179 the chain is Cytoplasmic; sequence EYLDRIQFLV…KLRQKKGLRS (263 aa). The region spanning 2968 to 3102 is the Guanylate cyclase 2 domain; sequence AFLFADIVGF…LDVLIANKIE (135 aa). The Mg(2+) site is built by Asp-2973, Ile-2974, and Asp-3017.

This sequence in the N-terminal section; belongs to the cation transport ATPase (P-type) (TC 3.A.3) family. Type IV subfamily. It in the C-terminal section; belongs to the adenylyl cyclase class-4/guanylyl cyclase family. The cofactor is Mg(2+). It depends on Mn(2+) as a cofactor.

The protein resides in the membrane. The catalysed reaction is GTP = 3',5'-cyclic GMP + diphosphate. With respect to regulation, basal guanylate activity of the recombinant guanylate cyclase domains 1 and 2 is not modulated by an increase in Ca(2+) levels or by the gametogenesis inducer xanthurenic acid. Its function is as follows. Catalyzes the synthesis of the second messenger cGMP from GTP. Regulates cGMP production in gametocytes; however, is dispensable for the initiation of gametogenesis. Does not have adenylate cyclase activity. This chain is Guanylate cyclase beta, found in Plasmodium falciparum (isolate 3D7).